We begin with the raw amino-acid sequence, 419 residues long: Maltoporin 2 (419 aa).

Residues 1 to 23 (MKTSLRTLSVALAAALVSPSVLA) form the signal peptide.

The protein belongs to the porin LamB (TC 1.B.3) family. Homotrimer formed of three 18-stranded antiparallel beta-barrels, containing three independent channels.

The protein resides in the cell outer membrane. The catalysed reaction is beta-maltose(in) = beta-maltose(out). In terms of biological role, involved in the transport of maltose and maltodextrins. This is Maltoporin 2 from Yersinia pestis bv. Antiqua (strain Antiqua).